The following is a 153-amino-acid chain: MDGTGISDGSSVTGDAAAGFPAGATQAPGSKQGMDLYFDNALQYMGEHPVLAGVGGFLALYVGAGVYKGVQTRLNGGKAATQFLKGGFDPKMNAKEALQILNLKENNLTTKKLKEVHRKIMLANHPDKGGSPYLATKINEAKDFLEKKGIVRK.

The Mitochondrial intermembrane segment spans residues 1–43; it reads MDGTGISDGSSVTGDAAAGFPAGATQAPGSKQGMDLYFDNALQ. Residues 44–66 traverse the membrane as a helical segment; it reads YMGEHPVLAGVGGFLALYVGAGV. Residues 67 to 153 lie on the Mitochondrial matrix side of the membrane; that stretch reads YKGVQTRLNG…FLEKKGIVRK (87 aa). In terms of domain architecture, J spans 96 to 153; sequence EALQILNLKENNLTTKKLKEVHRKIMLANHPDKGGSPYLATKINEAKDFLEKKGIVRK.

This sequence belongs to the TIM14 family. Heterodimer with PAM16. Component of the PAM complex, at least composed of mtHsp70, MGE1, TIM44, PAM16, PAM17 and PAM18.

It is found in the mitochondrion inner membrane. Its function is as follows. Essential component of the PAM complex, a complex required for the translocation of transit peptide-containing proteins from the inner membrane into the mitochondrial matrix in an ATP-dependent manner. In the complex, it is required to stimulate activity of mtHSP70 (SSC1). The protein is Mitochondrial import inner membrane translocase subunit TIM14 (PAM18) of Candida glabrata (strain ATCC 2001 / BCRC 20586 / JCM 3761 / NBRC 0622 / NRRL Y-65 / CBS 138) (Yeast).